The following is a 353-amino-acid chain: Aliphatic aldoxime dehydratase (353 aa).

Residue Ser-219 coordinates an aliphatic aldoxime. Residue His-299 coordinates heme b. His-320 serves as a coordination point for an aliphatic aldoxime. Residue His-320 is part of the active site.

This sequence belongs to the heme-containing dehydratase family. Homodimer. Heme b is required as a cofactor.

The enzyme catalyses an aliphatic aldoxime = a nitrile + H2O. Active when the heme iron is in the ferrous state. Activated by FMN, Fe(2+), Sn(2+), Na(2)SO(3), Na(2)S and vitamin K3. Catalyzes the dehydration of aldoximes to their corresponding nitrile. Is active toward various arylalkyl- and alkyl-aldoximes, and to a lesser extent toward aryl-aldoximes. The protein is Aliphatic aldoxime dehydratase of Rhodococcus globerulus.